We begin with the raw amino-acid sequence, 447 residues long: MSSRLPALPLSRRQALLGGAGSAAALLLPGGAQAQTRLQITEGNVAPMPIAIPNFVAGTPADNEVGLGVAQVITNNLKRSGLFAPIDQAAFIERISNIDTPPQFQSWKTINAQALVTGRMTKQGDGRLKAEFRLWDVAAGQQLTGQQYFTSPEYWRRIAHIISDQIYERLTGEKGYFDSRVVFIDETGSKERRVKRLALMDQDGANVRYLTRGADLVLTPRFSPSTQEITYMEFGQGDPRVYLFNIETGQREIVGNFPGMSFSPRFSPDGQRVIMSLQQGGNSNLFVMDLRSKSTTRLTDTPAIDTSPSYAPDGSKICFESDRGGKPQIYVMPAGGGGAQRISFGEGSYSTPVWSPRGDYIAFTKQGGGQFSIGIMKPDGSGERLLTSGYHNEGPTFAPNGRVLMFFRDPGGNGGPSLFTVDISGRNEQKVPTPGFASDPAWSPLLS.

The signal sequence occupies residues 1–34 (MSSRLPALPLSRRQALLGGAGSAAALLLPGGAQA). The interval 426–447 (RNEQKVPTPGFASDPAWSPLLS) is disordered.

The protein belongs to the TolB family. As to quaternary structure, the Tol-Pal system is composed of five core proteins: the inner membrane proteins TolA, TolQ and TolR, the periplasmic protein TolB and the outer membrane protein Pal. They form a network linking the inner and outer membranes and the peptidoglycan layer.

The protein resides in the periplasm. In terms of biological role, part of the Tol-Pal system, which plays a role in outer membrane invagination during cell division and is important for maintaining outer membrane integrity. The chain is Tol-Pal system protein TolB from Rhodopseudomonas palustris (strain BisB18).